The primary structure comprises 430 residues: Enolase (430 aa).

Gln164 is a (2R)-2-phosphoglycerate binding site. The active-site Proton donor is Glu208. Asp245, Glu288, and Asp315 together coordinate Mg(2+). Lys340, Arg369, Ser370, and Lys391 together coordinate (2R)-2-phosphoglycerate. The Proton acceptor role is filled by Lys340.

Belongs to the enolase family. Mg(2+) serves as cofactor.

The protein resides in the cytoplasm. It is found in the secreted. Its subcellular location is the cell surface. It carries out the reaction (2R)-2-phosphoglycerate = phosphoenolpyruvate + H2O. It participates in carbohydrate degradation; glycolysis; pyruvate from D-glyceraldehyde 3-phosphate: step 4/5. Functionally, catalyzes the reversible conversion of 2-phosphoglycerate (2-PG) into phosphoenolpyruvate (PEP). It is essential for the degradation of carbohydrates via glycolysis. In Pyrococcus furiosus (strain ATCC 43587 / DSM 3638 / JCM 8422 / Vc1), this protein is Enolase.